Reading from the N-terminus, the 435-residue chain is Dual specificity mitogen-activated protein kinase kinase jkk-1 (435 aa).

Basic and acidic residues predominate over residues Arg-35–Cys-49. Residues Arg-35–Glu-90 are disordered. A compositionally biased stretch (polar residues) spans Ser-50–Tyr-66. Residues Ile-122–Tyr-385 enclose the Protein kinase domain. Residues Leu-128–Val-136 and Lys-149 each bind ATP. The Proton acceptor role is filled by Asp-246.

It belongs to the protein kinase superfamily. STE Ser/Thr protein kinase family. MAP kinase kinase subfamily. As to quaternary structure, interacts with unc-16. It depends on Mg(2+) as a cofactor. Expressed in most neurons, including nerve ring, head ganglions, dorsal and ventral nerve cords and tail ganglions.

Its subcellular location is the cytoplasm. It localises to the perikaryon. It is found in the cell projection. The protein localises to the axon. The catalysed reaction is L-seryl-[protein] + ATP = O-phospho-L-seryl-[protein] + ADP + H(+). It carries out the reaction L-threonyl-[protein] + ATP = O-phospho-L-threonyl-[protein] + ADP + H(+). It catalyses the reaction L-tyrosyl-[protein] + ATP = O-phospho-L-tyrosyl-[protein] + ADP + H(+). Functionally, dual specificity protein kinase which acts as an essential component of the JNK signal transduction pathway. May phosphorylate jnk-1. Plays a role in coordinating locomotion via D-type GABAergic motoneurons and in regulating synaptic vesicle transport downstream of adapter protein unc-16 and probably by activating jnk-1. Positively regulates lifespan. Upon environmental stress such as heat stress regulates daf-16 nuclear translocation probably by activating jnk-1. Regulates germline cell apoptosis in response to heavy metals such as Cu(2+) and to arsenite. The chain is Dual specificity mitogen-activated protein kinase kinase jkk-1 from Caenorhabditis elegans.